A 155-amino-acid chain; its full sequence is Basic phospholipase A2 PC9 (155 aa).

The signal sequence occupies residues 1–21 (MYPAHLLVLLAVCVSLLGASA). Residues 22–27 (ISPRPL) constitute a propeptide that is removed on maturation. 7 cysteine pairs are disulfide-bonded: C38–C98, C54–C144, C56–C72, C71–C125, C78–C118, C87–C111, and C105–C116. 3 residues coordinate Ca(2+): Y55, G57, and G59. H75 is an active-site residue. Residue D76 coordinates Ca(2+). Residue D119 is part of the active site.

This sequence belongs to the phospholipase A2 family. Group I subfamily. D49 sub-subfamily. Requires Ca(2+) as cofactor. In terms of tissue distribution, expressed by the venom gland.

The protein localises to the secreted. It carries out the reaction a 1,2-diacyl-sn-glycero-3-phosphocholine + H2O = a 1-acyl-sn-glycero-3-phosphocholine + a fatty acid + H(+). In terms of biological role, snake venom phospholipase A2 (PLA2) that inhibits neuromuscular transmission by blocking acetylcholine release from the nerve termini. PLA2 catalyzes the calcium-dependent hydrolysis of the 2-acyl groups in 3-sn-phosphoglycerides. This Laticauda colubrina (Yellow-lipped sea krait) protein is Basic phospholipase A2 PC9.